Here is a 903-residue protein sequence, read N- to C-terminus: Probable dipeptidyl-aminopeptidase B (903 aa).

The disordered stretch occupies residues 1 to 83 (MGKFEDDGNS…PLISSGTKTG (83 aa)). Topologically, residues 1-90 (MGKFEDDGNS…KTGSSSRLRK (90 aa)) are cytoplasmic. Polar residues predominate over residues 10 to 37 (SESVPLTRQRSESLASQTSTDSGLSIAS). The helical; Signal-anchor for type II membrane protein transmembrane segment at 91 to 111 (IVWLLVLLCVGGWVLSFVLFL) threads the bilayer. At 112-903 (TQKRPDTAAL…TANPKPQEST (792 aa)) the chain is on the vacuolar side. The interval 121–143 (LSSASTVEIHEPGPATGGTSHGK) is disordered. N-linked (GlcNAc...) asparagine glycans are attached at residues Asn-268, Asn-349, and Asn-640. Ser-754 (charge relay system) is an active-site residue. A glycan (N-linked (GlcNAc...) asparagine) is linked at Asn-808. Active-site charge relay system residues include Asp-831 and His-864.

This sequence belongs to the peptidase S9B family.

Its subcellular location is the vacuole membrane. It carries out the reaction Release of an N-terminal dipeptide, Xaa-Yaa-|-Zaa-, from a polypeptide, preferentially when Yaa is Pro, provided Zaa is neither Pro nor hydroxyproline.. Its function is as follows. Type IV dipeptidyl-peptidase which removes N-terminal dipeptides sequentially from polypeptides having unsubstituted N-termini provided that the penultimate residue is proline. The sequence is that of Probable dipeptidyl-aminopeptidase B (dapB) from Penicillium rubens (strain ATCC 28089 / DSM 1075 / NRRL 1951 / Wisconsin 54-1255) (Penicillium chrysogenum).